The chain runs to 219 residues: N-(5'-phosphoribosyl)anthranilate isomerase (219 aa).

The protein belongs to the TrpF family.

The enzyme catalyses N-(5-phospho-beta-D-ribosyl)anthranilate = 1-(2-carboxyphenylamino)-1-deoxy-D-ribulose 5-phosphate. The protein operates within amino-acid biosynthesis; L-tryptophan biosynthesis; L-tryptophan from chorismate: step 3/5. The protein is N-(5'-phosphoribosyl)anthranilate isomerase of Bordetella avium (strain 197N).